Here is a 316-residue protein sequence, read N- to C-terminus: BTB/POZ domain-containing adapter for CUL3-mediated RhoA degradation protein 2 (316 aa).

One can recognise a BTB domain in the interval 28–96 (KYVQLNVGGS…LRDDTITLPQ (69 aa)). Over residues 268 to 279 (EATSRSRSQASP) the composition is skewed to polar residues. Residues 268-287 (EATSRSRSQASPSEDEETFE) are disordered. Ser-278 bears the Phosphoserine mark. Ser-280 bears the Phosphoserine; by CK2 mark.

This sequence belongs to the BACURD family. Component of the BCR(TNFAIP1) E3 ubiquitin ligase complex, at least composed of CUL3, TNFAIP1/BACURD2 and RBX1. Interacts with RHOA; with a preference for RhoA-GDP. Interacts with RHOB. Interacts with PCNA. Interacts with CSNK2B. Phosphorylation at Ser-280 by CK2 facilitates the nucleus localization and increases interaction with PCNA.

It is found in the cytoplasm. The protein localises to the nucleus. Its subcellular location is the endosome. Its pathway is protein modification; protein ubiquitination. Substrate-specific adapter of a BCR (BTB-CUL3-RBX1) E3 ubiquitin-protein ligase complex involved in regulation of cytoskeleton structure. The BCR(TNFAIP1) E3 ubiquitin ligase complex mediates the ubiquitination of RHOA, leading to its degradation by the proteasome, thereby regulating the actin cytoskeleton and cell migration. Its interaction with RHOB may regulate apoptosis. May enhance the PCNA-dependent DNA polymerase delta activity. The chain is BTB/POZ domain-containing adapter for CUL3-mediated RhoA degradation protein 2 (TNFAIP1) from Homo sapiens (Human).